We begin with the raw amino-acid sequence, 605 residues long: Glutamine--fructose-6-phosphate aminotransferase [isomerizing] (605 aa).

Cysteine 2 functions as the Nucleophile; for GATase activity in the catalytic mechanism. A Glutamine amidotransferase type-2 domain is found at 2–219 (CGIVGVVGSK…DKELVVLTKD (218 aa)). SIS domains follow at residues 285 to 424 (IIKG…AEGE) and 457 to 595 (VADL…VDKP). Catalysis depends on lysine 600, which acts as the For Fru-6P isomerization activity.

Homodimer.

It is found in the cytoplasm. The catalysed reaction is D-fructose 6-phosphate + L-glutamine = D-glucosamine 6-phosphate + L-glutamate. Its function is as follows. Catalyzes the first step in hexosamine metabolism, converting fructose-6P into glucosamine-6P using glutamine as a nitrogen source. This chain is Glutamine--fructose-6-phosphate aminotransferase [isomerizing], found in Lactococcus lactis subsp. lactis (strain IL1403) (Streptococcus lactis).